A 185-amino-acid polypeptide reads, in one-letter code: Dirigent protein 12 (185 aa).

A signal peptide spans Met-1–Ser-25. Cys-37 and Cys-184 are oxidised to a cystine. Residues Asn-56 and Asn-120 are each glycosylated (N-linked (GlcNAc...) asparagine).

Belongs to the plant dirigent protein family. In terms of assembly, homodimer. In terms of tissue distribution, seed coat specific expression.

Its subcellular location is the secreted. It is found in the extracellular space. The protein resides in the apoplast. Dirigent proteins impart stereoselectivity on the phenoxy radical-coupling reaction, yielding optically active lignans from two molecules of coniferyl alcohol in the biosynthesis of lignans, flavonolignans, and alkaloids and thus plays a central role in plant secondary metabolism. Required for seed accumulation of neolignans. This Arabidopsis thaliana (Mouse-ear cress) protein is Dirigent protein 12 (DIR12).